The chain runs to 2640 residues: Collagen alpha-5(VI) chain (2640 aa).

The signal sequence occupies residues 1 to 18; sequence MKLRLIAFVLILWTETLA. The interval 19 to 1426 is nonhelical region; sequence DQSPGPGPEY…ACCCTFCKCP (1408 aa). VWFA domains are found at residues 30 to 209, 268 to 445, 474 to 644, 660 to 829, 846 to 1023, 1037 to 1214, and 1226 to 1413; these read DVVF…IKDV, DLIF…LKKI, DIYF…KNEI, DIMF…ESKL, DIVF…QETL, DVIF…VREI, and DVVV…LGNI. 3 N-linked (GlcNAc...) asparagine glycosylation sites follow: Asn-201, Asn-292, and Asn-614. 5 consecutive Collagen-like domains span residues 1426–1478, 1474–1524, 1557–1614, 1632–1689, and 1706–1762; these read PGIP…GCPG, VGCP…DPGN, GQKG…GPEG, GSQG…GIPG, and GDPG…AGQP. Positions 1427–1760 are triple-helical region; that stretch reads GIPGPHGTRG…GRRGPKGTAG (334 aa). Residues 1435–1761 form a disordered region; that stretch reads RGLQASKGSS…RRGPKGTAGQ (327 aa). Basic and acidic residues predominate over residues 1452 to 1464; it reads HRGEDGDPGRRGE. Basic and acidic residues predominate over residues 1537–1567; sequence DGEKGFPGDPGDPGKDSNIKGQKGEKGERGR. Residues 1597-1609 show a composition bias toward polar residues; the sequence is PSGQAGNPGPQGT. A compositionally biased stretch (low complexity) spans 1610–1622; sequence QGPEGLQGSQGSS. Positions 1649-1651 match the Cell attachment site motif; that stretch reads RGD. The segment covering 1718-1727 has biased composition (gly residues); sequence GIPGGPGPKG. Positions 1740–1750 are enriched in low complexity; the sequence is RSGLQGSQGPP. The interval 1761-2640 is nonhelical region; that stretch reads QPIYSPCELI…NSKQDGEDAR (880 aa). VWFA domains lie at 1790 to 1970 and 1996 to 2186; these read ELVF…KLRR and DVAF…VKFL. Short sequence motifs (cell attachment site) lie at residues 2216-2218 and 2259-2261; these read RGD. In terms of domain architecture, VWFA 10 spans 2321 to 2516; it reads DVAFLIDASQ…PDLDYVIKFI (196 aa). Asn-2541 is a glycosylation site (N-linked (GlcNAc...) asparagine). Residues 2617-2640 are disordered; the sequence is DKEEPCSAETPAPVNSKQDGEDAR.

The protein belongs to the type VI collagen family. Trimers composed of three different chains: alpha-1(VI), alpha-2(VI), and alpha-3(VI) or alpha-4(VI) or alpha-5(VI) or alpha-6(VI). Prolines at the third position of the tripeptide repeating unit (G-X-Y) are hydroxylated in some or all of the chains. As to expression, in newborn, it is expressed in lung, heart, kidney, muscle, brain, intestine, skin, femur, sternum and calvaria. In adult, it is widely expressed and is detected in lung, heart, kidney, spleen, muscle, ovary, uterus, brain, skin, liver and sternum.

The protein resides in the secreted. The protein localises to the extracellular space. Its subcellular location is the extracellular matrix. Collagen VI acts as a cell-binding protein. This chain is Collagen alpha-5(VI) chain (Col6a5), found in Mus musculus (Mouse).